A 271-amino-acid chain; its full sequence is Phosphatidylinositol transfer protein beta isoform (271 aa).

Lys-215 carries the N6-acetyllysine modification. Ser-262 is subject to Phosphoserine.

The protein belongs to the PtdIns transfer protein family. PI transfer class I subfamily. In terms of processing, constitutive phosphorylation of Ser-262 has no effect on phospholipid transfer activity but is required for Golgi targeting. In terms of tissue distribution, expressed abundantly in brain, kidney, liver, and lung, but in a lesser amount in testis.

It is found in the golgi apparatus. The protein localises to the golgi apparatus membrane. Its subcellular location is the endoplasmic reticulum membrane. It carries out the reaction a 1,2-diacyl-sn-glycero-3-phosphocholine(in) = a 1,2-diacyl-sn-glycero-3-phosphocholine(out). It catalyses the reaction a 1,2-diacyl-sn-glycero-3-phospho-(1D-myo-inositol)(in) = a 1,2-diacyl-sn-glycero-3-phospho-(1D-myo-inositol)(out). The catalysed reaction is an N-(acyl)-sphingosylphosphocholine(in) = an N-(acyl)-sphingosylphosphocholine(out). Its activity is regulated as follows. Phosphatidylinositol transfer activity is inhibited by N-ethylmaleimide. Its function is as follows. Catalyzes the transfer of phosphatidylinositol between membranes. Also catalyzes the transfer of phosphatidylcholine and sphingomyelin between membranes. Required for COPI-mediated retrograde transport from the Golgi to the endoplasmic reticulum; phosphatidylinositol and phosphatidylcholine transfer activity is essential for this function. The sequence is that of Phosphatidylinositol transfer protein beta isoform (Pitpnb) from Rattus norvegicus (Rat).